The chain runs to 274 residues: Ribosomal RNA small subunit methyltransferase A (274 aa).

Residues His-15, Leu-17, Gly-42, Glu-64, Asp-89, and Asn-108 each contribute to the S-adenosyl-L-methionine site.

Belongs to the class I-like SAM-binding methyltransferase superfamily. rRNA adenine N(6)-methyltransferase family. RsmA subfamily.

It localises to the cytoplasm. It carries out the reaction adenosine(1518)/adenosine(1519) in 16S rRNA + 4 S-adenosyl-L-methionine = N(6)-dimethyladenosine(1518)/N(6)-dimethyladenosine(1519) in 16S rRNA + 4 S-adenosyl-L-homocysteine + 4 H(+). Its function is as follows. Specifically dimethylates two adjacent adenosines (A1518 and A1519) in the loop of a conserved hairpin near the 3'-end of 16S rRNA in the 30S particle. May play a critical role in biogenesis of 30S subunits. The chain is Ribosomal RNA small subunit methyltransferase A from Prochlorococcus marinus (strain MIT 9215).